Here is a 430-residue protein sequence, read N- to C-terminus: Maintenance of mitochondrial morphology protein 1 (430 aa).

At methionine 1 to glycine 82 the chain is on the lumenal side. A helical transmembrane segment spans residues leucine 83–phenylalanine 103. Residues alanine 104–leucine 430 lie on the Cytoplasmic side of the membrane. Basic and acidic residues-rich tracts occupy residues arginine 126 to asparagine 138 and glutamate 335 to lysine 346. Disordered stretches follow at residues arginine 126 to glutamate 154 and glutamine 315 to lysine 346. The 231-residue stretch at alanine 178–proline 408 folds into the SMP-LTD domain.

It belongs to the MMM1 family. As to quaternary structure, homodimer. Component of the ER-mitochondria encounter structure (ERMES) or MDM complex, composed of MMM1, MDM10, MDM12 and MDM34. An MMM1 homodimer associates with one molecule of MDM12 on each side in a pairwise head-to-tail manner, and the SMP-LTD domains of MMM1 and MDM12 generate a continuous hydrophobic tunnel for phospholipid trafficking.

It is found in the endoplasmic reticulum membrane. Component of the ERMES/MDM complex, which serves as a molecular tether to connect the endoplasmic reticulum (ER) and mitochondria. Components of this complex are involved in the control of mitochondrial shape and protein biogenesis, and function in nonvesicular lipid trafficking between the ER and mitochondria. The MDM12-MMM1 subcomplex functions in the major beta-barrel assembly pathway that is responsible for biogenesis of all outer membrane beta-barrel proteins, and acts in a late step after the SAM complex. The MDM10-MDM12-MMM1 subcomplex further acts in the TOM40-specific pathway after the action of the MDM12-MMM1 complex. Essential for establishing and maintaining the structure of mitochondria and maintenance of mtDNA nucleoids. This chain is Maintenance of mitochondrial morphology protein 1, found in Lodderomyces elongisporus (strain ATCC 11503 / CBS 2605 / JCM 1781 / NBRC 1676 / NRRL YB-4239) (Yeast).